A 390-amino-acid chain; its full sequence is Pyruvate dehydrogenase E1 component subunit alpha-1, mitochondrial (390 aa).

Residues 1–15 (MAAAILLRRVPPARA) constitute a mitochondrion transit peptide. The pyruvate site is built by H91, Y117, R118, G166, V168, D197, G198, A199, N226, and Y228. The thiamine diphosphate site is built by Y117, R118, G166, V168, D197, G198, A199, and N226. D197 serves as a coordination point for Mg(2+). Positions 226 and 228 each coordinate Mg(2+). H292 lines the thiamine diphosphate pocket. The interval 293 to 312 (SMSDPGSTYRTRDEISGVRQ) is disordered. Residues 302–312 (RTRDEISGVRQ) show a composition bias toward basic and acidic residues.

Tetramer of 2 alpha and 2 beta subunits. The cofactor is thiamine diphosphate. Mg(2+) serves as cofactor.

The protein resides in the mitochondrion matrix. It carries out the reaction N(6)-[(R)-lipoyl]-L-lysyl-[protein] + pyruvate + H(+) = N(6)-[(R)-S(8)-acetyldihydrolipoyl]-L-lysyl-[protein] + CO2. The pyruvate dehydrogenase complex catalyzes the overall conversion of pyruvate to acetyl-CoA and CO(2). It contains multiple copies of three enzymatic components: pyruvate dehydrogenase (E1), dihydrolipoamide acetyltransferase (E2) and lipoamide dehydrogenase (E3). The protein is Pyruvate dehydrogenase E1 component subunit alpha-1, mitochondrial of Oryza sativa subsp. japonica (Rice).